We begin with the raw amino-acid sequence, 213 residues long: FMN-dependent NADH:quinone oxidoreductase (213 aa).

S10 is an FMN binding site.

This sequence belongs to the azoreductase type 1 family. As to quaternary structure, homodimer. The cofactor is FMN.

The enzyme catalyses 2 a quinone + NADH + H(+) = 2 a 1,4-benzosemiquinone + NAD(+). It carries out the reaction N,N-dimethyl-1,4-phenylenediamine + anthranilate + 2 NAD(+) = 2-(4-dimethylaminophenyl)diazenylbenzoate + 2 NADH + 2 H(+). Functionally, quinone reductase that provides resistance to thiol-specific stress caused by electrophilic quinones. In terms of biological role, also exhibits azoreductase activity. Catalyzes the reductive cleavage of the azo bond in aromatic azo compounds to the corresponding amines. This chain is FMN-dependent NADH:quinone oxidoreductase, found in Opitutus terrae (strain DSM 11246 / JCM 15787 / PB90-1).